The following is a 638-amino-acid chain: Exotoxin A (638 aa).

The N-terminal stretch at 1-25 (MHLTPHWIPLVASLGLLAGGSFASA) is a signal peptide. Positions 26 to 277 (AEEAFDLWNE…VISHRLHFPE (252 aa)) are domain Ia (required for target cell recognition). The II (required for translocation in target cell cytoplasm) stretch occupies residues 278 to 389 (GGSLAALTAH…TGNDEAGAAS (112 aa)). Cys-290 and Cys-312 form a disulfide bridge. Positions 390-429 (ADVVSLTCPVAAGECAGPADSGDALLERNYPTGAEFLGDG) are domain Ib. The III (required for ADP-ribosyl activity) stretch occupies residues 430–638 (GDISFSTRGT…PGKPPREDLK (209 aa)). NAD(+)-binding positions include 465-467 (HGT), Ser-474, 479-485 (GVRARSQ), and Glu-578. Residue Glu-578 is part of the active site. The segment at 596-638 (IPTDPRNVGGDLDPSSIPDKEQAISALPDYASQPGKPPREDLK) is disordered.

In terms of processing, the 8 cysteines participate in intrachain disulfide bonds.

It catalyses the reaction diphthamide-[translation elongation factor 2] + NAD(+) = N-(ADP-D-ribosyl)diphthamide-[translation elongation factor 2] + nicotinamide + H(+). With respect to regulation, inhibited by 1,8-naphthalimide (NAP) as well as a number of poly(ADP-ribose) polymerase inhibitors and other compounds. An NAD-dependent ADP-ribosyltransferase (ADPRT). Catalyzes the transfer of the ADP ribosyl moiety of oxidized NAD (NAD(+)) onto eukaryotic elongation factor 2 (eEF-2) thus arresting protein synthesis. Has an LD(50) of 65 ng/ml against the human lung epithelial cell line C38. This Pseudomonas aeruginosa (strain ATCC 15692 / DSM 22644 / CIP 104116 / JCM 14847 / LMG 12228 / 1C / PRS 101 / PAO1) protein is Exotoxin A.